The chain runs to 649 residues: Centrosomal protein of 63 kDa-A (649 aa).

Coiled-coil stretches lie at residues D19–Q185 and E222–S556. S560 carries the post-translational modification Phosphoserine; by atm and atr. Residues F612–F645 adopt a coiled-coil conformation.

It belongs to the CEP63 family. In terms of processing, phosphorylation at Ser-560 by atm and atr promotes its delocalization from the centrosome and impairs its ability to promote centrosome dependent spindle assembly.

Its subcellular location is the cytoplasm. The protein localises to the cytoskeleton. It localises to the microtubule organizing center. It is found in the centrosome. The protein resides in the centriole. Its function is as follows. Required for normal spindle assembly. Plays a key role in mother-centriole-dependent centriole duplication. Plays a role in DNA damage response. Following DNA damage, such as double-strand breaks (DSBs), is removed from centrosomes; this leads to the inactivation of spindle assembly and delay in mitotic progression. This Xenopus laevis (African clawed frog) protein is Centrosomal protein of 63 kDa-A (cep63-a).